Here is a 164-residue protein sequence, read N- to C-terminus: UPF0225 protein Shewana3_2159 (164 aa).

The protein belongs to the UPF0225 family.

This Shewanella sp. (strain ANA-3) protein is UPF0225 protein Shewana3_2159.